Reading from the N-terminus, the 108-residue chain is MGLSLAAYAGAALAEIAGCFAVWAWWRLGASALWLVPGALSLGAFAWLLALTPVEAAGRSYAVYGGVYVAASLLWLWAVEGVRPDRWDMGGAALVLAGAAVILWAPRG.

The next 4 membrane-spanning stretches (helical) occupy residues 5–25 (LAAY…VWAW), 32–52 (ALWL…LALT), 62–82 (AVYG…VEGV), and 86–106 (RWDM…LWAP).

It belongs to the UPF0060 family.

Its subcellular location is the cell inner membrane. The polypeptide is UPF0060 membrane protein Rsph17029_0436 (Cereibacter sphaeroides (strain ATCC 17029 / ATH 2.4.9) (Rhodobacter sphaeroides)).